The primary structure comprises 269 residues: Growth-regulating factor 11 (269 aa).

Residues 1-11 show a composition bias toward basic and acidic residues; that stretch reads MAAEGEAKKDS. Residues 1–71 form a disordered region; the sequence is MAAEGEAKKD…GKEDVEEGGV (71 aa). Positions 43-52 are enriched in gly residues; the sequence is GEAGGGGGGG. Acidic residues predominate over residues 58–68; sequence EEEEGKEDVEE. Residues 114 to 149 form the QLQ domain; that stretch reads AFTAMQLQELEQQSRVYQYMAARVPVPTHLVFPIWK. The region spanning 180 to 224 is the WRC domain; the sequence is EPEPGRCRRTDGKKWRCWRNAIANEKYCERHMHRGRKRPVQLVVE. Short sequence motifs (bipartite nuclear localization signal) lie at residues 185-195 and 213-217; these read RCRRTDGKKWR and RGRKR. Residues 212-269 are disordered; it reads HRGRKRPVQLVVEDDEPDSTSGSKPASGKATEGGKKTDDKSSSSKKLAVAAPAAVEST. The span at 243–253 shows a compositional bias: basic and acidic residues; it reads EGGKKTDDKSS. A compositionally biased stretch (low complexity) spans 255-269; it reads SKKLAVAAPAAVEST.

Belongs to the GRF family.

It is found in the nucleus. Its function is as follows. Transcription activator that plays a regulatory role in gibberellin-induced stem elongation. The sequence is that of Growth-regulating factor 11 (GRF11) from Oryza sativa subsp. japonica (Rice).